The following is a 301-amino-acid chain: MPIIIDKDLPARKVLQEENIFVMTKERAETQDIRALKIAILNLMPTKQETEAQLLRLIGNTPLQLDVHLLHMESHLSRNVAQEHLTSFYKTFRDIENEKFDGLIITGAPVETLSFEEVDYWEELKRIMEYSKTNVTSTLHICWGAQAGLYHHYGVQKYPLKEKMFGVFEHEVREQHVKLLQGFDELFFAPHSRHTEVRENDIRGVKELTLLANSEEAGVHLVIGPEGRQVFALGHSEYSCDTLKQEYERDRQKGLNIDVPKNYFKHDNPNEKPLVRWRSHGNLLFSNWLNYYVYQETPYVL.

Cys142 serves as the catalytic Acyl-thioester intermediate. 2 residues coordinate substrate: Lys163 and Ser192. His235 acts as the Proton acceptor in catalysis. Glu237 is a catalytic residue. A substrate-binding site is contributed by Arg249.

Belongs to the MetA family.

It is found in the cytoplasm. The catalysed reaction is L-homoserine + acetyl-CoA = O-acetyl-L-homoserine + CoA. It functions in the pathway amino-acid biosynthesis; L-methionine biosynthesis via de novo pathway; O-acetyl-L-homoserine from L-homoserine: step 1/1. Transfers an acetyl group from acetyl-CoA to L-homoserine, forming acetyl-L-homoserine. This is Homoserine O-acetyltransferase from Bacillus cereus (strain ZK / E33L).